Reading from the N-terminus, the 502-residue chain is UDP-N-acetylmuramoylalanine--D-glutamate ligase (502 aa).

129-135 (GTNGKTT) provides a ligand contact to ATP. The disordered stretch occupies residues 288–307 (APDETTSRRRKRDGAHTPDI).

This sequence belongs to the MurCDEF family.

The protein resides in the cytoplasm. It carries out the reaction UDP-N-acetyl-alpha-D-muramoyl-L-alanine + D-glutamate + ATP = UDP-N-acetyl-alpha-D-muramoyl-L-alanyl-D-glutamate + ADP + phosphate + H(+). It participates in cell wall biogenesis; peptidoglycan biosynthesis. Functionally, cell wall formation. Catalyzes the addition of glutamate to the nucleotide precursor UDP-N-acetylmuramoyl-L-alanine (UMA). This chain is UDP-N-acetylmuramoylalanine--D-glutamate ligase, found in Burkholderia ambifaria (strain ATCC BAA-244 / DSM 16087 / CCUG 44356 / LMG 19182 / AMMD) (Burkholderia cepacia (strain AMMD)).